The sequence spans 484 residues: ATP synthase subunit beta (484 aa).

169–176 provides a ligand contact to ATP; the sequence is GGAGVGKT.

This sequence belongs to the ATPase alpha/beta chains family. As to quaternary structure, F-type ATPases have 2 components, CF(1) - the catalytic core - and CF(0) - the membrane proton channel. CF(1) has five subunits: alpha(3), beta(3), gamma(1), delta(1), epsilon(1). CF(0) has three main subunits: a(1), b(2) and c(9-12). The alpha and beta chains form an alternating ring which encloses part of the gamma chain. CF(1) is attached to CF(0) by a central stalk formed by the gamma and epsilon chains, while a peripheral stalk is formed by the delta and b chains.

Its subcellular location is the cell membrane. The enzyme catalyses ATP + H2O + 4 H(+)(in) = ADP + phosphate + 5 H(+)(out). Produces ATP from ADP in the presence of a proton gradient across the membrane. The catalytic sites are hosted primarily by the beta subunits. In Cutibacterium acnes (strain DSM 16379 / KPA171202) (Propionibacterium acnes), this protein is ATP synthase subunit beta.